Here is a 451-residue protein sequence, read N- to C-terminus: Speckle-type POZ protein homolog (451 aa).

Positions 51-75 are disordered; it reads EVVSSGSGNSAHGRSISPSPSSASH. A compositionally biased stretch (low complexity) spans 60-75; that stretch reads SAHGRSISPSPSSASH. Residues 95–225 form the MATH domain; that stretch reads KFNYMWTINN…GDRLSIFCEV (131 aa). In terms of domain architecture, BTB spans 265–338; that stretch reads SDFTLVCKSD…MYTGQTKYIE (74 aa).

This sequence belongs to the Tdpoz family.

It localises to the nucleus. The protein localises to the nucleus speckle. It participates in protein modification; protein ubiquitination. Its function is as follows. Mediates ubiquitination and proteasomal degradation of target proteins, most likely in complex with cul-3. May promote the degradation of bromodomain-containing proteins such as bet-1. This chain is Speckle-type POZ protein homolog, found in Caenorhabditis elegans.